The following is a 506-amino-acid chain: MVSSTTPSSGEYLLEMSGINKSFPGVKALDNVNLKVRPHSIHALMGENGAGKSTLLKCMFGIYQKDSGTILFQGKEIDFHSAKEALENGISMVHQELNLVLQRSVMDNMWLGRYPTKGMFVDQDKMYRETKAIFDELDIDIDPRARVGTLSVSQMQMIEIAKAFSYNAKIVIMDEPTSSLTEKEVNHLFTIIRKLKERGCGIVYISHKMEEIFQLCDEVTVLRDGQWIATEPLAGLTMDKIIAMMVGRSLNQRFPDKENKPGEVILEVRNLTSLRQPSIRDVSFDLHKGEILGIAGLVGAKRTDIVETLFGIREKSAGTITLHGKQINNHNANEAINHGFALVTEERRSTGIYAYLDIGFNSLISNIRNYKNKVGLLDNSRMKSDTQWVIDSMRVKTPGHRTQIGSLSGGNQQKVIIGRWLLTQPEILMLDEPTRGIDVGAKFEIYQLIAELAKKGKGIIIISSEMPELLGITDRILVMSNGLVSGIVDTKTTTQNEILRLASLHL.

2 ABC transporter domains span residues 14-249 and 264-506; these read LEMS…VGRS and VILE…SLHL. Residue 46-53 participates in ATP binding; sequence GENGAGKS.

This sequence belongs to the ABC transporter superfamily. Galactose/methyl galactoside importer (TC 3.A.1.2.3) family. The complex is composed of one ATP-binding protein (MglA), two transmembrane proteins (MglC) and a solute-binding protein (MglB).

It is found in the cell inner membrane. It carries out the reaction D-galactose(out) + ATP + H2O = D-galactose(in) + ADP + phosphate + H(+). The enzyme catalyses methyl beta-D-galactoside(out) + ATP + H2O = methyl beta-D-galactoside(in) + ADP + phosphate + H(+). Its function is as follows. Part of the ABC transporter complex MglABC involved in galactose/methyl galactoside import. Responsible for energy coupling to the transport system. In Shigella flexneri serotype 5b (strain 8401), this protein is Galactose/methyl galactoside import ATP-binding protein MglA.